Reading from the N-terminus, the 245-residue chain is Fibroblast growth factor-binding protein 3 (245 aa).

A signal peptide spans 1-28 (MSPPRPRASLSPLTLLLLLGGCLLSAAG). Residues 33–52 (AAGREVTRASRPTVGSSGRF) are disordered. Cystine bridges form between C60–C81 and C91–C125. The tract at residues 136-216 (CARKTAGSDL…PAAAGFQPNG (81 aa)) is disordered. Over residues 170–180 (RSRQSVRSPSS) the composition is skewed to low complexity. An intrachain disulfide couples C228 to C236.

The protein belongs to the fibroblast growth factor-binding protein family. Interacts with FGF2. In terms of tissue distribution, in the adult, highly expressed in brain with lower levels in ovary. In the embryo, highest levels are found in the brain and spinal cord at 14 dpc and expression is almost completely restricted to the brain by 18 dpc. In the adult and postnatal brain, highly expressed in the orbitofrontal cortex where it is concentrated primarily in differentiated neurons.

The protein resides in the secreted. Functionally, heparin-binding protein which binds to FGF2, prevents binding of FGF2 to heparin and probably inhibits immobilization of FGF2 on extracellular matrix glycosaminoglycans, allowing its release and subsequent activation of FGFR signaling which leads to increased vascular permeability. In Mus musculus (Mouse), this protein is Fibroblast growth factor-binding protein 3 (Fgfbp3).